Reading from the N-terminus, the 290-residue chain is 6-phospho-5-dehydro-2-deoxy-D-gluconate aldolase (290 aa).

Catalysis depends on Asp-85, which acts as the Proton donor. Positions 86 and 180 each coordinate Zn(2+). Residue Gly-181 participates in dihydroxyacetone phosphate binding. Position 208 (His-208) interacts with Zn(2+). Dihydroxyacetone phosphate is bound by residues 209 to 211 (GAS) and 230 to 233 (NINT). At Thr-233 the chain carries Phosphothreonine.

It belongs to the class II fructose-bisphosphate aldolase family. IolJ subfamily. Requires Zn(2+) as cofactor.

It carries out the reaction 6-phospho-5-dehydro-2-deoxy-D-gluconate = 3-oxopropanoate + dihydroxyacetone phosphate. The protein operates within polyol metabolism; myo-inositol degradation into acetyl-CoA; acetyl-CoA from myo-inositol: step 6/7. Its function is as follows. Produces dihydroxyacetone phosphate (DHAP or glycerone phosphate) and malonic semialdehyde (MSA or 3-oxopropanoate) from 6-phospho-5-dehydro-2-deoxy-D-gluconate (DKGP). The chain is 6-phospho-5-dehydro-2-deoxy-D-gluconate aldolase (iolJ) from Bacillus subtilis (strain 168).